The chain runs to 750 residues: Serine/threonine-protein kinase PknG (750 aa).

The interval 1–66 is disordered; it reads MAKASETERS…PQDRMATTSR (66 aa). Positions 17–34 are enriched in polar residues; it reads ADAQTATSATVRPLSTQA. The Protein kinase domain maps to 151–396; sequence YEVKGCIAHG…EMSAQLTGVL (246 aa). ATP is bound by residues 157 to 165 and Lys-181; that span reads IAHGGLGWI. The Proton acceptor role is filled by Asp-276.

It belongs to the protein kinase superfamily. Ser/Thr protein kinase family. Post-translationally, autophosphorylated.

It catalyses the reaction L-seryl-[protein] + ATP = O-phospho-L-seryl-[protein] + ADP + H(+). It carries out the reaction L-threonyl-[protein] + ATP = O-phospho-L-threonyl-[protein] + ADP + H(+). The protein is Serine/threonine-protein kinase PknG (pknG) of Mycobacterium bovis (strain ATCC BAA-935 / AF2122/97).